We begin with the raw amino-acid sequence, 218 residues long: Monomethylamine corrinoid protein 1 (218 aa).

The B12-binding N-terminal domain maps to 1-91 (MANQEIFDKL…ELEKTKVEGE (91 aa)). The region spanning 94–218 (TGLAITFVAE…AAKVALNIMK (125 aa)) is the B12-binding domain. Methylcob(III)alamin is bound at residue His107.

Belongs to the methylamine corrinoid protein family. As to quaternary structure, can form a complex with MtmB.

It participates in one-carbon metabolism; methanogenesis from methylamine. Acts as a methyl group carrier between MtmB and MtbA. The sequence is that of Monomethylamine corrinoid protein 1 (mtmC1) from Methanosarcina mazei (strain ATCC BAA-159 / DSM 3647 / Goe1 / Go1 / JCM 11833 / OCM 88) (Methanosarcina frisia).